Consider the following 633-residue polypeptide: Probable potassium transport system protein Kup 2 (633 aa).

11 consecutive transmembrane segments (helical) span residues 59–79 (ISAI…ILIM), 110–130 (ILLV…LTPA), 145–165 (TALQ…LFLF), 173–193 (IGAL…AAGI), 219–239 (GFAS…AEAL), 256–276 (FGLV…LIIV), 287–307 (LLYP…ATVI), 345–365 (IYIP…VLGF), 374–394 (AYGV…FFVI), 402–422 (LLLS…FVSS), and 429–449 (EGGW…LTWV).

This sequence belongs to the HAK/KUP transporter (TC 2.A.72) family.

The protein resides in the cell inner membrane. It carries out the reaction K(+)(in) + H(+)(in) = K(+)(out) + H(+)(out). In terms of biological role, transport of potassium into the cell. Likely operates as a K(+):H(+) symporter. The polypeptide is Probable potassium transport system protein Kup 2 (Cupriavidus necator (strain ATCC 17699 / DSM 428 / KCTC 22496 / NCIMB 10442 / H16 / Stanier 337) (Ralstonia eutropha)).